Reading from the N-terminus, the 350-residue chain is Outer membrane porin PhoE (350 aa).

Residues 1-20 (MNKSTLAIVVSIIASASVHA) form the signal peptide.

This sequence belongs to the Gram-negative porin family. As to quaternary structure, homotrimer.

The protein localises to the cell outer membrane. In terms of biological role, uptake of inorganic phosphate, phosphorylated compounds, and some other negatively charged solutes. The polypeptide is Outer membrane porin PhoE (phoE) (Salmonella typhimurium (strain LT2 / SGSC1412 / ATCC 700720)).